Here is a 402-residue protein sequence, read N- to C-terminus: S-adenosylmethionine synthase (402 aa).

His-15 serves as a coordination point for ATP. Asp-17 is a Mg(2+) binding site. Glu-43 contacts K(+). Positions 56 and 99 each coordinate L-methionine. Positions 99–109 (QSPDIAQGVDT) are flexible loop. Residues 174-176 (DGK), 247-248 (RF), Asp-256, 262-263 (RK), Ala-279, and Lys-283 contribute to the ATP site. Asp-256 is a binding site for L-methionine. Lys-287 contacts L-methionine.

It belongs to the AdoMet synthase family. Homotetramer; dimer of dimers. Requires Mg(2+) as cofactor. K(+) is required as a cofactor.

The protein resides in the cytoplasm. It catalyses the reaction L-methionine + ATP + H2O = S-adenosyl-L-methionine + phosphate + diphosphate. Its pathway is amino-acid biosynthesis; S-adenosyl-L-methionine biosynthesis; S-adenosyl-L-methionine from L-methionine: step 1/1. Its function is as follows. Catalyzes the formation of S-adenosylmethionine (AdoMet) from methionine and ATP. The overall synthetic reaction is composed of two sequential steps, AdoMet formation and the subsequent tripolyphosphate hydrolysis which occurs prior to release of AdoMet from the enzyme. The protein is S-adenosylmethionine synthase of Streptomyces avermitilis (strain ATCC 31267 / DSM 46492 / JCM 5070 / NBRC 14893 / NCIMB 12804 / NRRL 8165 / MA-4680).